Here is a 376-residue protein sequence, read N- to C-terminus: Cyclic GMP-AMP synthase-like receptor 1 (376 aa).

2 residues coordinate Mg(2+): Glu77 and Asp79.

It belongs to the mab-21 family. Requires Mg(2+) as cofactor. The cofactor is Mn(2+).

It catalyses the reaction UTP + ATP = 3',3'-cUAMP + 2 diphosphate. Functionally, nucleotidyltransferase that catalyzes the formation of cyclic UMP-AMP (3',3'-cUAMP) from ATP and UTP and plays a key role in innate immunity. Acts as a key sensor of double-stranded RNA (dsRNA), the presence of dsRNA in the cytoplasm being a danger signal that triggers the immune responses. Directly binds dsRNA, activating the nucleotidyltransferase activity, leading to synthesis of 3',3'-cUAMP, a second messenger that binds to and activates Sting, thereby triggering the immune response via activation of the NF-kappa-B transcription factor. This Stylophora pistillata (Smooth cauliflower coral) protein is Cyclic GMP-AMP synthase-like receptor 1.